The following is a 135-amino-acid chain: Putative pre-16S rRNA nuclease (135 aa).

Belongs to the YqgF nuclease family.

It is found in the cytoplasm. Could be a nuclease involved in processing of the 5'-end of pre-16S rRNA. The sequence is that of Putative pre-16S rRNA nuclease from Christiangramia forsetii (strain DSM 17595 / CGMCC 1.15422 / KT0803) (Gramella forsetii).